A 330-amino-acid polypeptide reads, in one-letter code: Beta-hexosaminidase (330 aa).

Residues Asp-62, Arg-70, Arg-130, and Lys-160–His-161 contribute to the substrate site. Residue His-173 is the Proton donor/acceptor of the active site. Asp-242 (nucleophile) is an active-site residue.

This sequence belongs to the glycosyl hydrolase 3 family. NagZ subfamily. Monomer.

The protein resides in the cytoplasm. The enzyme catalyses Hydrolysis of terminal non-reducing N-acetyl-D-hexosamine residues in N-acetyl-beta-D-hexosaminides.. It participates in cell wall biogenesis; peptidoglycan recycling. Functionally, plays a role in peptidoglycan recycling by cleaving the terminal beta-1,4-linked N-acetylglucosamine (GlcNAc) from peptide-linked peptidoglycan fragments, giving rise to free GlcNAc, anhydro-N-acetylmuramic acid and anhydro-N-acetylmuramic acid-linked peptides. Plays a role in beta-lactam antibiotic resistance via its role in generating anhydro-N-acetylmuramic acid-linked peptides; these peptides function as signaling molecules that induce high-level expression of the beta-lactamase AmpC. This chain is Beta-hexosaminidase, found in Vibrio cholerae serotype O1 (strain ATCC 39315 / El Tor Inaba N16961).